A 99-amino-acid chain; its full sequence is Nucleoid-associated protein LL0120 (99 aa).

Belongs to the YbaB/EbfC family. As to quaternary structure, homodimer.

It localises to the cytoplasm. It is found in the nucleoid. Functionally, binds to DNA and alters its conformation. May be involved in regulation of gene expression, nucleoid organization and DNA protection. This chain is Nucleoid-associated protein LL0120 (ybcG), found in Lactococcus lactis subsp. lactis (strain IL1403) (Streptococcus lactis).